The sequence spans 83 residues: Small ribosomal subunit protein bS16 (83 aa).

Belongs to the bacterial ribosomal protein bS16 family.

The protein is Small ribosomal subunit protein bS16 of Herminiimonas arsenicoxydans.